Consider the following 313-residue polypeptide: Porphobilinogen deaminase (313 aa).

S-(dipyrrolylmethanemethyl)cysteine is present on Cys242.

It belongs to the HMBS family. Monomer. Dipyrromethane is required as a cofactor.

It carries out the reaction 4 porphobilinogen + H2O = hydroxymethylbilane + 4 NH4(+). It participates in porphyrin-containing compound metabolism; protoporphyrin-IX biosynthesis; coproporphyrinogen-III from 5-aminolevulinate: step 2/4. In terms of biological role, tetrapolymerization of the monopyrrole PBG into the hydroxymethylbilane pre-uroporphyrinogen in several discrete steps. In Shigella flexneri, this protein is Porphobilinogen deaminase.